Consider the following 247-residue polypeptide: Carboxy-S-adenosyl-L-methionine synthase (247 aa).

S-adenosyl-L-methionine contacts are provided by residues Tyr40, 65–67 (GSS), 90–91 (DN), 122–123 (DI), Asn137, and Arg204.

It belongs to the class I-like SAM-binding methyltransferase superfamily. Cx-SAM synthase family. As to quaternary structure, homodimer.

It catalyses the reaction prephenate + S-adenosyl-L-methionine = carboxy-S-adenosyl-L-methionine + 3-phenylpyruvate + H2O. Its function is as follows. Catalyzes the conversion of S-adenosyl-L-methionine (SAM) to carboxy-S-adenosyl-L-methionine (Cx-SAM). This is Carboxy-S-adenosyl-L-methionine synthase from Pseudomonas savastanoi pv. phaseolicola (strain 1448A / Race 6) (Pseudomonas syringae pv. phaseolicola (strain 1448A / Race 6)).